The chain runs to 606 residues: Elongation factor 4 (606 aa).

The tr-type G domain maps to 10–192; the sequence is ENIRNFSIIA…AIVQQLPAPK (183 aa). GTP contacts are provided by residues 22–27 and 139–142; these read DHGKST and NKID.

It belongs to the TRAFAC class translation factor GTPase superfamily. Classic translation factor GTPase family. LepA subfamily.

Its subcellular location is the cell membrane. The catalysed reaction is GTP + H2O = GDP + phosphate + H(+). Functionally, required for accurate and efficient protein synthesis under certain stress conditions. May act as a fidelity factor of the translation reaction, by catalyzing a one-codon backward translocation of tRNAs on improperly translocated ribosomes. Back-translocation proceeds from a post-translocation (POST) complex to a pre-translocation (PRE) complex, thus giving elongation factor G a second chance to translocate the tRNAs correctly. Binds to ribosomes in a GTP-dependent manner. The protein is Elongation factor 4 of Lawsonia intracellularis (strain PHE/MN1-00).